A 490-amino-acid polypeptide reads, in one-letter code: Ketol-acid reductoisomerase (NADP(+)) (490 aa).

The KARI N-terminal Rossmann domain maps to 16–207 (INKCRFMKKE…GGHRAGVLES (192 aa)). NADP(+)-binding positions include 44–47 (CGAQ), K67, S77, and 107–109 (DKQ). H131 is an active-site residue. G157 is an NADP(+) binding site. 2 consecutive KARI C-terminal knotted domains span residues 208 to 343 (SFIA…TAPV) and 344 to 483 (YNEK…MKKM). Mg(2+) is bound by residues D216, E220, E388, and E392. S413 provides a ligand contact to substrate.

It belongs to the ketol-acid reductoisomerase family. The cofactor is Mg(2+).

The enzyme catalyses (2R)-2,3-dihydroxy-3-methylbutanoate + NADP(+) = (2S)-2-acetolactate + NADPH + H(+). It catalyses the reaction (2R,3R)-2,3-dihydroxy-3-methylpentanoate + NADP(+) = (S)-2-ethyl-2-hydroxy-3-oxobutanoate + NADPH + H(+). Its pathway is amino-acid biosynthesis; L-isoleucine biosynthesis; L-isoleucine from 2-oxobutanoate: step 2/4. It participates in amino-acid biosynthesis; L-valine biosynthesis; L-valine from pyruvate: step 2/4. Involved in the biosynthesis of branched-chain amino acids (BCAA). Catalyzes an alkyl-migration followed by a ketol-acid reduction of (S)-2-acetolactate (S2AL) to yield (R)-2,3-dihydroxy-isovalerate. In the isomerase reaction, S2AL is rearranged via a Mg-dependent methyl migration to produce 3-hydroxy-3-methyl-2-ketobutyrate (HMKB). In the reductase reaction, this 2-ketoacid undergoes a metal-dependent reduction by NADPH to yield (R)-2,3-dihydroxy-isovalerate. This chain is Ketol-acid reductoisomerase (NADP(+)), found in Buchnera aphidicola subsp. Acyrthosiphon pisum (strain 5A).